A 383-amino-acid polypeptide reads, in one-letter code: Proton extrusion protein PxcA (383 aa).

Helical transmembrane passes span 163-183 (ILLLLILVPLLIQQVAGAYII), 258-278 (AVKNVFSDLSALIAFTVVCFA), 306-326 (IILFTDIFVGFHSPEGWTVLL), and 341-361 (FVMLFIATFPVILATIFKYWI).

Belongs to the CemA family.

Its subcellular location is the cell inner membrane. Required for H(+) efflux immediately after light irradiation to form a rapid H(+) concentration gradient across the thylakoid membranes. Together with PxcL, contributes to transient H(+) uptake following dark to light transition. The chain is Proton extrusion protein PxcA from Synechococcus sp. (strain CC9902).